A 203-amino-acid chain; its full sequence is Small ribosomal subunit protein uS4 (203 aa).

The 64-residue stretch at 93–156 folds into the S4 RNA-binding domain; the sequence is RRLDNVVYRL…MKVPAILEAV (64 aa).

This sequence belongs to the universal ribosomal protein uS4 family. Part of the 30S ribosomal subunit. Contacts protein S5. The interaction surface between S4 and S5 is involved in control of translational fidelity.

In terms of biological role, one of the primary rRNA binding proteins, it binds directly to 16S rRNA where it nucleates assembly of the body of the 30S subunit. Its function is as follows. With S5 and S12 plays an important role in translational accuracy. The protein is Small ribosomal subunit protein uS4 of Streptococcus agalactiae serotype Ia (strain ATCC 27591 / A909 / CDC SS700).